Consider the following 268-residue polypeptide: Tryptophan synthase alpha chain (268 aa).

Catalysis depends on proton acceptor residues glutamate 49 and aspartate 60.

This sequence belongs to the TrpA family. Tetramer of two alpha and two beta chains.

It carries out the reaction (1S,2R)-1-C-(indol-3-yl)glycerol 3-phosphate + L-serine = D-glyceraldehyde 3-phosphate + L-tryptophan + H2O. The protein operates within amino-acid biosynthesis; L-tryptophan biosynthesis; L-tryptophan from chorismate: step 5/5. Functionally, the alpha subunit is responsible for the aldol cleavage of indoleglycerol phosphate to indole and glyceraldehyde 3-phosphate. In Erwinia tasmaniensis (strain DSM 17950 / CFBP 7177 / CIP 109463 / NCPPB 4357 / Et1/99), this protein is Tryptophan synthase alpha chain.